The following is a 112-amino-acid chain: UPF0102 protein CHAB381_0216 (112 aa).

This sequence belongs to the UPF0102 family.

The polypeptide is UPF0102 protein CHAB381_0216 (Campylobacter hominis (strain ATCC BAA-381 / DSM 21671 / CCUG 45161 / LMG 19568 / NCTC 13146 / CH001A)).